The primary structure comprises 647 residues: Threonine--tRNA ligase (647 aa).

One can recognise a TGS domain in the interval 1-61; it reads MIKITFPDGA…EEDGSIEIVT (61 aa). The segment at 240-538 is catalytic; it reads DHRKLGKELD…LIETYKGAFP (299 aa). Zn(2+) contacts are provided by C334, H385, and H515.

It belongs to the class-II aminoacyl-tRNA synthetase family. In terms of assembly, homodimer. The cofactor is Zn(2+).

The protein localises to the cytoplasm. The enzyme catalyses tRNA(Thr) + L-threonine + ATP = L-threonyl-tRNA(Thr) + AMP + diphosphate + H(+). Catalyzes the attachment of threonine to tRNA(Thr) in a two-step reaction: L-threonine is first activated by ATP to form Thr-AMP and then transferred to the acceptor end of tRNA(Thr). Also edits incorrectly charged L-seryl-tRNA(Thr). In Streptococcus agalactiae serotype V (strain ATCC BAA-611 / 2603 V/R), this protein is Threonine--tRNA ligase.